We begin with the raw amino-acid sequence, 237 residues long: MKSNKKSNHLRAIYRALVIAIGLAVIIVFNYFNRKNNNARSSRRACSCFFSLTGVNLEKIGSFDTGAKLIVLNHQSLLDIIYLEAYHPSNICWIAKKELGEIPFYGHALTDTGMILIDREDKKGIVSLLKACKEKLDQNRPLVIFPEGTRGKGGEKFLPFKQGAKIIAEKFQLKIQPMVLINSIKIFNSKPLEAYKARTRLVMLESYTPDFSSPTWYEELQERMQKEYLKHYHELNA.

The HXXXXD motif motif lies at 74 to 79 (HQSLLD).

It belongs to the 1-acyl-sn-glycerol-3-phosphate acyltransferase family.

The protein resides in the cell inner membrane. The catalysed reaction is a 1-acyl-sn-glycero-3-phosphate + an acyl-CoA = a 1,2-diacyl-sn-glycero-3-phosphate + CoA. The protein operates within phospholipid metabolism; CDP-diacylglycerol biosynthesis; CDP-diacylglycerol from sn-glycerol 3-phosphate: step 2/3. Converts lysophosphatidic acid (LPA) into phosphatidic acid by incorporating acyl moiety at the 2 position. The protein is 1-acyl-sn-glycerol-3-phosphate acyltransferase (plsC) of Helicobacter pylori (strain J99 / ATCC 700824) (Campylobacter pylori J99).